A 398-amino-acid polypeptide reads, in one-letter code: Succinate--CoA ligase [ADP-forming] subunit beta (398 aa).

An ATP-grasp domain is found at 9–237; the sequence is RDLFETHGVP…AGGLDILELK (229 aa). ATP-binding positions include K45, 52–54, A94, and E99; that span reads GRG. 2 residues coordinate Mg(2+): N191 and D205. Substrate is bound by residues N257 and 319-321; that span reads GIT.

It belongs to the succinate/malate CoA ligase beta subunit family. Heterotetramer of two alpha and two beta subunits. Mg(2+) serves as cofactor.

It catalyses the reaction succinate + ATP + CoA = succinyl-CoA + ADP + phosphate. The enzyme catalyses GTP + succinate + CoA = succinyl-CoA + GDP + phosphate. The protein operates within carbohydrate metabolism; tricarboxylic acid cycle; succinate from succinyl-CoA (ligase route): step 1/1. Its function is as follows. Succinyl-CoA synthetase functions in the citric acid cycle (TCA), coupling the hydrolysis of succinyl-CoA to the synthesis of either ATP or GTP and thus represents the only step of substrate-level phosphorylation in the TCA. The beta subunit provides nucleotide specificity of the enzyme and binds the substrate succinate, while the binding sites for coenzyme A and phosphate are found in the alpha subunit. This chain is Succinate--CoA ligase [ADP-forming] subunit beta, found in Corynebacterium glutamicum (strain ATCC 13032 / DSM 20300 / JCM 1318 / BCRC 11384 / CCUG 27702 / LMG 3730 / NBRC 12168 / NCIMB 10025 / NRRL B-2784 / 534).